The chain runs to 268 residues: Imidazole glycerol phosphate synthase subunit HisF (268 aa).

Residues aspartate 12 and aspartate 131 contribute to the active site.

This sequence belongs to the HisA/HisF family. As to quaternary structure, heterodimer of HisH and HisF.

The protein resides in the cytoplasm. It catalyses the reaction 5-[(5-phospho-1-deoxy-D-ribulos-1-ylimino)methylamino]-1-(5-phospho-beta-D-ribosyl)imidazole-4-carboxamide + L-glutamine = D-erythro-1-(imidazol-4-yl)glycerol 3-phosphate + 5-amino-1-(5-phospho-beta-D-ribosyl)imidazole-4-carboxamide + L-glutamate + H(+). It participates in amino-acid biosynthesis; L-histidine biosynthesis; L-histidine from 5-phospho-alpha-D-ribose 1-diphosphate: step 5/9. Functionally, IGPS catalyzes the conversion of PRFAR and glutamine to IGP, AICAR and glutamate. The HisF subunit catalyzes the cyclization activity that produces IGP and AICAR from PRFAR using the ammonia provided by the HisH subunit. The polypeptide is Imidazole glycerol phosphate synthase subunit HisF (Methanosphaerula palustris (strain ATCC BAA-1556 / DSM 19958 / E1-9c)).